Here is a 483-residue protein sequence, read N- to C-terminus: Glutamyl-tRNA(Gln) amidotransferase subunit A (483 aa).

Residues Lys-76 and Ser-151 each act as charge relay system in the active site. The active-site Acyl-ester intermediate is the Ser-175.

It belongs to the amidase family. GatA subfamily. In terms of assembly, heterotrimer of A, B and C subunits.

The catalysed reaction is L-glutamyl-tRNA(Gln) + L-glutamine + ATP + H2O = L-glutaminyl-tRNA(Gln) + L-glutamate + ADP + phosphate + H(+). Its function is as follows. Allows the formation of correctly charged Gln-tRNA(Gln) through the transamidation of misacylated Glu-tRNA(Gln) in organisms which lack glutaminyl-tRNA synthetase. The reaction takes place in the presence of glutamine and ATP through an activated gamma-phospho-Glu-tRNA(Gln). The protein is Glutamyl-tRNA(Gln) amidotransferase subunit A of Azotobacter vinelandii (strain DJ / ATCC BAA-1303).